The sequence spans 419 residues: Keratin, type II cytoskeletal I (419 aa).

Residues 1–16 are linker 1; it reads KGSTKRANLDPLFEKY. Residues 1–275 enclose the IF rod domain; sequence KGSTKRANLD…YMLEGEEGRM (275 aa). Residues 17–108 are coil 1B; the sequence is ISDLKRYLDN…TLFAAELSQV (92 aa). The segment at 109-132 is linker 12; that stretch reads HDQVTDTSVVLTMDNNRDLNLDSI. Positions 133-271 are coil 2; sequence IKEVKCQYEQ…STYRYMLEGE (139 aa). A tail region spans residues 272-419; the sequence is EGRMSGQISN…STTSTTKRSY (148 aa).

Belongs to the intermediate filament family. Heterotetramer of two type I and two type II keratins.

The chain is Keratin, type II cytoskeletal I from Xenopus laevis (African clawed frog).